The following is a 420-amino-acid chain: Signal recognition particle receptor FtsY (420 aa).

Residues Asp28 to Lys62 are compositionally biased toward basic and acidic residues. The disordered stretch occupies residues Asp28 to Arg118. Positions Ala63–Pro104 are enriched in low complexity. GTP contacts are provided by residues Gly227–Thr234, Asp310–Arg314, and Ser372–Asp375.

This sequence belongs to the GTP-binding SRP family. FtsY subfamily. Part of the signal recognition particle protein translocation system, which is composed of SRP and FtsY.

The protein resides in the cell membrane. It localises to the cytoplasm. It catalyses the reaction GTP + H2O = GDP + phosphate + H(+). Involved in targeting and insertion of nascent membrane proteins into the cytoplasmic membrane. Acts as a receptor for the complex formed by the signal recognition particle (SRP) and the ribosome-nascent chain (RNC). The sequence is that of Signal recognition particle receptor FtsY from Bifidobacterium longum (strain NCC 2705).